We begin with the raw amino-acid sequence, 196 residues long: Molybdenum cofactor guanylyltransferase (196 aa).

GTP is bound by residues 10–12 (LAG), lysine 23, asparagine 51, aspartate 69, and aspartate 99. Aspartate 99 contributes to the Mg(2+) binding site.

This sequence belongs to the MobA family. In terms of assembly, monomer. Mg(2+) serves as cofactor.

It is found in the cytoplasm. It carries out the reaction Mo-molybdopterin + GTP + H(+) = Mo-molybdopterin guanine dinucleotide + diphosphate. Its function is as follows. Transfers a GMP moiety from GTP to Mo-molybdopterin (Mo-MPT) cofactor (Moco or molybdenum cofactor) to form Mo-molybdopterin guanine dinucleotide (Mo-MGD) cofactor. This is Molybdenum cofactor guanylyltransferase from Shewanella amazonensis (strain ATCC BAA-1098 / SB2B).